Here is a 220-residue protein sequence, read N- to C-terminus: MMKCLFLLCLCLLPIVVFSSTFTSQNLIDLPSESPVPKPVLDTNGKELNPNSSYRIISIGRGALGGDVYLGKSPNSDAPCPDGVFRYNSDVGPSGTPVRFIPLSTNIFEDQLLNIQFNIPTVKLCVSYTIWKVGNLNAHLRTMLLETGGTIGQADSSYFKIVKSSKFGYNLLYCPITRHFLCPFCRDDNFCAKVGVVIQNGKRRLALVNENPLDVLFQEV.

The N-terminal stretch at 1 to 23 is a signal peptide; that stretch reads MMKCLFLLCLCLLPIVVFSSTFT. The propeptide occupies 24-32; it reads SQNLIDLPS. A Vacuolar targeting signal motif is present at residues 26-31; it reads NLIDLP. Asn-51 carries N-linked (GlcNAc...) asparagine glycosylation. Disulfide bonds link Cys-80–Cys-125 and Cys-174–Cys-185.

The protein belongs to the protease inhibitor I3 (leguminous Kunitz-type inhibitor) family.

Its subcellular location is the vacuole. Functionally, inhibitor of cathepsin D (aspartic protease). May also inhibit trypsin and chymotrypsin (serine proteases). Protects the plant by inhibiting proteases of invading organisms. This Solanum tuberosum (Potato) protein is Aspartic protease inhibitor 5.